Consider the following 515-residue polypeptide: SWI/SNF-related matrix-associated actin-dependent regulator of chromatin subfamily D member 1 (515 aa).

The disordered stretch occupies residues 1–128 (MAARAGFQSV…RNHNAKKKKM (128 aa)). A compositionally biased stretch (gly residues) spans 14-23 (GGAGASGGAG). The segment at 43–167 (APGQGLYRSP…DQTIMRKRLD (125 aa)) is interaction with ESR1, NR1H4, NR3C1, PGR and SMARCA4. Residues Arg68 and Arg88 each carry the asymmetric dimethylarginine modification. A Glycyl lysine isopeptide (Lys-Gly) (interchain with G-Cter in SUMO2) cross-link involves residue Lys101. The span at 104 to 117 (APQQIQQVQQQAVQ) shows a compositional bias: low complexity. The interaction with SMARCC1 and SMARCC2 stretch occupies residues 168 to 474 (IQEALKRPIK…TMTDVVGNPE (307 aa)). Residues 180–515 (RKLRIFISNT…LEQALGIRNT (336 aa)) form a necessary for GR/NR3C1-mediated remodeling and transcription from chromatin; required for GR/NR3C1 interaction with the BRG1/SMARCA4 complex in vivo region. Thr203 bears the Phosphothreonine mark. At Lys223 the chain carries N6-acetyllysine. The 78-residue stretch at 290–367 (YQPPQFKLDP…PQRLHALLMP (78 aa)) folds into the SWIB/MDM2 domain. The stretch at 412–440 (ASQQEIATLDNKIHETIETINQLKTQREF) forms a coiled coil.

Belongs to the SMARCD family. Component of the multiprotein chromatin-remodeling complexes SWI/SNF: SWI/SNF-A (BAF), SWI/SNF-B (PBAF) and related complexes. The canonical complex contains a catalytic subunit (either SMARCA4/BRG1/BAF190A or SMARCA2/BRM/BAF190B), and at least SMARCE1, ACTL6A/BAF53, SMARCC1/BAF155, SMARCC2/BAF170, and SMARCB1/SNF5/BAF47. Other subunits specific to each of the complexes may also be present permitting several possible combinations developmentally and tissue specific. Component of the BAF complex, which includes at least actin (ACTB), ARID1A/BAF250A, ARID1B/BAF250B, SMARCA2/BRM, SMARCA4/BRG1/BAF190A, ACTL6A/BAF53, ACTL6B/BAF53B, SMARCE1/BAF57, SMARCC1/BAF155, SMARCC2/BAF170, SMARCB1/SNF5/INI1, and one or more SMARCD1/BAF60A, SMARCD2/BAF60B, or SMARCD3/BAF60C. In muscle cells, the BAF complex also contains DPF3. Component of neural progenitors-specific chromatin remodeling complex (npBAF complex) composed of at least, ARID1A/BAF250A or ARID1B/BAF250B, SMARCD1/BAF60A, SMARCD3/BAF60C, SMARCA2/BRM/BAF190B, SMARCA4/BRG1/BAF190A, SMARCB1/BAF47, SMARCC1/BAF155, SMARCE1/BAF57, SMARCC2/BAF170, PHF10/BAF45A, ACTL6A/BAF53A and actin. Component of neuron-specific chromatin remodeling complex (nBAF complex) composed of at least, ARID1A/BAF250A or ARID1B/BAF250B, SMARCD1/BAF60A, SMARCD3/BAF60C, SMARCA2/BRM/BAF190B, SMARCA4/BRG1/BAF190A, SMARCB1/BAF47, SMARCC1/BAF155, SMARCE1/BAF57, SMARCC2/BAF170, DPF1/BAF45B, DPF3/BAF45C, ACTL6B/BAF53B and actin. Component of the SWI/SNF-B (PBAF) chromatin remodeling complex, at least composed of SMARCA4/BRG1, SMARCB1/BAF47/SNF5, ACTL6A/BAF53A or ACTL6B/BAF53B, SMARCE1/BAF57, SMARCD1/BAF60A, SMARCD2/BAF60B, perhaps SMARCD3/BAF60C, SMARCC1/BAF155, SMARCC2/BAF170, PBRM1/BAF180, ARID2/BAF200 and actin (ACTB). Component of SWI/SNF (GBAF) subcomplex, which includes at least BICRA or BICRAL (mutually exclusive), BRD9, SS18, SMARCA2/BRM, SMARCA4/BRG1/BAF190A, ACTL6A/BAF53, SMARCC1/BAF155, and SMARCD1/BAF60A. Specifically interacts with the VDR heterodimer complex. Interacts with ESR1, NR3C1, NR1H4, PGR, SMARCA4, SMARCC1 and SMARCC2. Interacts with DPF2. Interacts with DPF3a (isoform 2 of DPF3/BAF45C) and with HDGFL2 in a DPF3a-dependent manner. Interacts with FOS, FOSB isoform 1 and 2, FOSL1 and FOSL2. Interacts with AKIRIN2. Ubiquitous.

It localises to the nucleus. Involved in transcriptional activation and repression of select genes by chromatin remodeling (alteration of DNA-nucleosome topology). Component of SWI/SNF chromatin remodeling complexes that carry out key enzymatic activities, changing chromatin structure by altering DNA-histone contacts within a nucleosome in an ATP-dependent manner. Belongs to the neural progenitors-specific chromatin remodeling complex (npBAF complex) and the neuron-specific chromatin remodeling complex (nBAF complex). During neural development a switch from a stem/progenitor to a postmitotic chromatin remodeling mechanism occurs as neurons exit the cell cycle and become committed to their adult state. The transition from proliferating neural stem/progenitor cells to postmitotic neurons requires a switch in subunit composition of the npBAF and nBAF complexes. As neural progenitors exit mitosis and differentiate into neurons, npBAF complexes which contain ACTL6A/BAF53A and PHF10/BAF45A, are exchanged for homologous alternative ACTL6B/BAF53B and DPF1/BAF45B or DPF3/BAF45C subunits in neuron-specific complexes (nBAF). The npBAF complex is essential for the self-renewal/proliferative capacity of the multipotent neural stem cells. The nBAF complex along with CREST plays a role regulating the activity of genes essential for dendrite growth. Has a strong influence on vitamin D-mediated transcriptional activity from an enhancer vitamin D receptor element (VDRE). May be a link between mammalian SWI-SNF-like chromatin remodeling complexes and the vitamin D receptor (VDR) heterodimer. Mediates critical interactions between nuclear receptors and the BRG1/SMARCA4 chromatin-remodeling complex for transactivation. The chain is SWI/SNF-related matrix-associated actin-dependent regulator of chromatin subfamily D member 1 (Smarcd1) from Mus musculus (Mouse).